The chain runs to 142 residues: Transcription antitermination protein NusB (142 aa).

It belongs to the NusB family.

Its function is as follows. Involved in transcription antitermination. Required for transcription of ribosomal RNA (rRNA) genes. Binds specifically to the boxA antiterminator sequence of the ribosomal RNA (rrn) operons. The protein is Transcription antitermination protein NusB of Trichlorobacter lovleyi (strain ATCC BAA-1151 / DSM 17278 / SZ) (Geobacter lovleyi).